Reading from the N-terminus, the 35-residue chain is Turgencin-B (35 aa).

Met5 and Met9 each carry methionine sulfoxide. 3 disulfides stabilise this stretch: Cys7–Cys31, Cys11–Cys27, and Cys16–Cys24. Gly35 is subject to Glycine amide.

Post-translationally, oxidation likely reduces antimicrobial activity against Gram-positive bacteria and Gram-negative bacteria.

It is found in the secreted. In terms of biological role, has antimicrobial activity against Gram-positive bacteria (C.glutamicum ATCC 13032 (MIC=1.6 uM) and B.subtilis ATCC 23857 (MIC=1.6 uM)) and Gram-negative bacteria (E.coli ATCC 25922 (MIC=12.5 uM) and P.aeruginosa ATCC 27853 (MIC=25.0 uM)). Displays very low activity against the Gram-positive bacteria S.aureus ATCC 9144 (MIC&gt;100 uM). The polypeptide is Turgencin-B (Synoicum turgens (Colonial ascidian)).